A 232-amino-acid chain; its full sequence is Ribose-5-phosphate isomerase A (232 aa).

Substrate-binding positions include 28–31, 83–86, and 96–99; these read TGST, DGAD, and KGGG. Glu105 (proton acceptor) is an active-site residue. Residue Lys123 participates in substrate binding.

The protein belongs to the ribose 5-phosphate isomerase family. Homodimer.

It carries out the reaction aldehydo-D-ribose 5-phosphate = D-ribulose 5-phosphate. It participates in carbohydrate degradation; pentose phosphate pathway; D-ribose 5-phosphate from D-ribulose 5-phosphate (non-oxidative stage): step 1/1. In terms of biological role, catalyzes the reversible conversion of ribose-5-phosphate to ribulose 5-phosphate. The protein is Ribose-5-phosphate isomerase A of Nitrobacter hamburgensis (strain DSM 10229 / NCIMB 13809 / X14).